Consider the following 261-residue polypeptide: 3-deoxy-manno-octulosonate cytidylyltransferase 1 (261 aa).

It belongs to the KdsB family.

It is found in the cytoplasm. The enzyme catalyses 3-deoxy-alpha-D-manno-oct-2-ulosonate + CTP = CMP-3-deoxy-beta-D-manno-octulosonate + diphosphate. It participates in nucleotide-sugar biosynthesis; CMP-3-deoxy-D-manno-octulosonate biosynthesis; CMP-3-deoxy-D-manno-octulosonate from 3-deoxy-D-manno-octulosonate and CTP: step 1/1. Its pathway is bacterial outer membrane biogenesis; lipopolysaccharide biosynthesis. In terms of biological role, activates KDO (a required 8-carbon sugar) for incorporation into bacterial lipopolysaccharide in Gram-negative bacteria. This is 3-deoxy-manno-octulosonate cytidylyltransferase 1 from Burkholderia lata (strain ATCC 17760 / DSM 23089 / LMG 22485 / NCIMB 9086 / R18194 / 383).